Here is a 43-residue protein sequence, read N- to C-terminus: Protein PsbN (43 aa).

Residues 3 to 23 (IATLVAIFISGLLVSFTGYAL) form a helical membrane-spanning segment.

Belongs to the PsbN family.

The protein localises to the plastid. It is found in the chloroplast thylakoid membrane. May play a role in photosystem I and II biogenesis. The sequence is that of Protein PsbN from Euonymus alatus (Burning bush).